A 219-amino-acid chain; its full sequence is UPF0376 protein C36C5.12 (219 aa).

The Cytoplasmic segment spans residues 1–20 (MGRLDVKNSWIEFHQDEMTS). The chain crosses the membrane as a helical; Signal-anchor for type II membrane protein span at residues 21–43 (FLKLAIIGTVLLGVAHGANLTAA). Over 44 to 219 (EKETYCELRS…VSKCDFSRLG (176 aa)) the chain is Extracellular. N-linked (GlcNAc...) asparagine glycans are attached at residues N104 and N204.

This sequence belongs to the UPF0376 family.

The protein resides in the membrane. This chain is UPF0376 protein C36C5.12, found in Caenorhabditis elegans.